The chain runs to 175 residues: ATP synthase subunit delta (175 aa).

The protein belongs to the ATPase delta chain family. F-type ATPases have 2 components, F(1) - the catalytic core - and F(0) - the membrane proton channel. F(1) has five subunits: alpha(3), beta(3), gamma(1), delta(1), epsilon(1). F(0) has three main subunits: a(1), b(2) and c(10-14). The alpha and beta chains form an alternating ring which encloses part of the gamma chain. F(1) is attached to F(0) by a central stalk formed by the gamma and epsilon chains, while a peripheral stalk is formed by the delta and b chains.

Its subcellular location is the cell inner membrane. In terms of biological role, f(1)F(0) ATP synthase produces ATP from ADP in the presence of a proton or sodium gradient. F-type ATPases consist of two structural domains, F(1) containing the extramembraneous catalytic core and F(0) containing the membrane proton channel, linked together by a central stalk and a peripheral stalk. During catalysis, ATP synthesis in the catalytic domain of F(1) is coupled via a rotary mechanism of the central stalk subunits to proton translocation. Its function is as follows. This protein is part of the stalk that links CF(0) to CF(1). It either transmits conformational changes from CF(0) to CF(1) or is implicated in proton conduction. The sequence is that of ATP synthase subunit delta from Xylella fastidiosa (strain M23).